The chain runs to 314 residues: Hydroxyethylthiazole kinase (314 aa).

M70 serves as a coordination point for substrate. R145 and S217 together coordinate ATP. G244 contacts substrate.

Belongs to the Thz kinase family. Requires Mg(2+) as cofactor.

The catalysed reaction is 5-(2-hydroxyethyl)-4-methylthiazole + ATP = 4-methyl-5-(2-phosphooxyethyl)-thiazole + ADP + H(+). It participates in cofactor biosynthesis; thiamine diphosphate biosynthesis; 4-methyl-5-(2-phosphoethyl)-thiazole from 5-(2-hydroxyethyl)-4-methylthiazole: step 1/1. In terms of biological role, catalyzes the phosphorylation of the hydroxyl group of 4-methyl-5-beta-hydroxyethylthiazole (THZ). The polypeptide is Hydroxyethylthiazole kinase (Bifidobacterium longum (strain NCC 2705)).